We begin with the raw amino-acid sequence, 147 residues long: Large-conductance mechanosensitive channel (147 aa).

2 consecutive transmembrane segments (helical) span residues 14–34 (VVDM…VKSL) and 85–105 (FGLF…LFMI).

It belongs to the MscL family. In terms of assembly, homopentamer.

It is found in the cell inner membrane. Its function is as follows. Channel that opens in response to stretch forces in the membrane lipid bilayer. May participate in the regulation of osmotic pressure changes within the cell. This Tolumonas auensis (strain DSM 9187 / NBRC 110442 / TA 4) protein is Large-conductance mechanosensitive channel.